The sequence spans 106 residues: UPF0060 membrane protein Bxeno_B1021 (106 aa).

Helical transmembrane passes span 2–22 (KTFL…YLPW), 30–50 (SIWL…LLTL), 58–78 (VYAA…WCVD), and 82–102 (PTLW…IIAF).

It belongs to the UPF0060 family.

The protein resides in the cell inner membrane. This Paraburkholderia xenovorans (strain LB400) protein is UPF0060 membrane protein Bxeno_B1021.